Consider the following 146-residue polypeptide: Ribonuclease H (146 aa).

The 142-residue stretch at 4–145 folds into the RNase H type-1 domain; sequence ELNKVVIYTD…ADILARSQIS (142 aa). Mg(2+) is bound by residues Asp13, Glu51, Asp73, and Asp137.

The protein belongs to the RNase H family. In terms of assembly, monomer. Requires Mg(2+) as cofactor.

It is found in the cytoplasm. It catalyses the reaction Endonucleolytic cleavage to 5'-phosphomonoester.. In terms of biological role, endonuclease that specifically degrades the RNA of RNA-DNA hybrids. In Ehrlichia canis (strain Jake), this protein is Ribonuclease H.